Reading from the N-terminus, the 407-residue chain is Phospholipid-transporting ATPase accessory subunit CDC50 (407 aa).

The tract at residues 1 to 33 (MAPRRRRGAGQDGSDDGRSDSDAPKNRPPNTAF) is disordered. Over 1-48 (MAPRRRRGAGQDGSDDGRSDSDAPKNRPPNTAFRQQRMRAWQCVLTPK) the chain is Cytoplasmic. Positions 15–25 (DDGRSDSDAPK) are enriched in basic and acidic residues. The helical transmembrane segment at 49–69 (LIVTVFSILAAIYLGFGAWLT) threads the bilayer. Over 70 to 359 (YLAHTVRDLK…TMGSRNIWPG (290 aa)) the chain is Extracellular. The cysteines at positions 85 and 139 are disulfide-linked. 2 N-linked (GlcNAc...) asparagine glycosylation sites follow: Asn131 and Asn189. A disulfide bridge links Cys193 with Cys210. N-linked (GlcNAc...) asparagine glycosylation is found at Asn219, Asn232, Asn241, and Asn314. Residues 360–380 (IIFLIVGGICLVLDIYFILSF) form a helical membrane-spanning segment. At 381-407 (FIWRPRKLGDPSYLSWNQPSAPGGHSS) the chain is on the cytoplasmic side.

Belongs to the CDC50/LEM3 family. Component of a flippase complex consisting of DNF1 and CDC50. Interacts with DNF1; the interaction is direct.

The protein localises to the cell membrane. Its function is as follows. Accessory component of a P4-ATPase flippase complex which catalyzes the hydrolysis of ATP coupled to the transport of phosphatidylcholine and phosphatidylserine from the lumen to the cytosolic leaflet of membranes and ensures the maintenance of asymmetric distribution of phospholipids. In Chaetomium thermophilum (strain DSM 1495 / CBS 144.50 / IMI 039719) (Thermochaetoides thermophila), this protein is Phospholipid-transporting ATPase accessory subunit CDC50.